A 95-amino-acid polypeptide reads, in one-letter code: MKITRTDVEHVATLARLELTEDEKDRFTGQLDAILAYVEKLNELDTDGIIPTSHAVPVENAFREDEVRPSIGVENALANAPDRVEGFFRVPRVIE.

This sequence belongs to the GatC family. In terms of assembly, heterotrimer of A, B and C subunits.

It catalyses the reaction L-glutamyl-tRNA(Gln) + L-glutamine + ATP + H2O = L-glutaminyl-tRNA(Gln) + L-glutamate + ADP + phosphate + H(+). The enzyme catalyses L-aspartyl-tRNA(Asn) + L-glutamine + ATP + H2O = L-asparaginyl-tRNA(Asn) + L-glutamate + ADP + phosphate + 2 H(+). In terms of biological role, allows the formation of correctly charged Asn-tRNA(Asn) or Gln-tRNA(Gln) through the transamidation of misacylated Asp-tRNA(Asn) or Glu-tRNA(Gln) in organisms which lack either or both of asparaginyl-tRNA or glutaminyl-tRNA synthetases. The reaction takes place in the presence of glutamine and ATP through an activated phospho-Asp-tRNA(Asn) or phospho-Glu-tRNA(Gln). This chain is Aspartyl/glutamyl-tRNA(Asn/Gln) amidotransferase subunit C, found in Geobacter sulfurreducens (strain ATCC 51573 / DSM 12127 / PCA).